Consider the following 212-residue polypeptide: Methylthioribulose-1-phosphate dehydratase (212 aa).

Zn(2+) contacts are provided by His-97 and His-99.

It belongs to the aldolase class II family. MtnB subfamily. As to quaternary structure, homotetramer. Zn(2+) serves as cofactor.

It catalyses the reaction 5-(methylsulfanyl)-D-ribulose 1-phosphate = 5-methylsulfanyl-2,3-dioxopentyl phosphate + H2O. The protein operates within amino-acid biosynthesis; L-methionine biosynthesis via salvage pathway; L-methionine from S-methyl-5-thio-alpha-D-ribose 1-phosphate: step 2/6. Functionally, catalyzes the dehydration of methylthioribulose-1-phosphate (MTRu-1-P) into 2,3-diketo-5-methylthiopentyl-1-phosphate (DK-MTP-1-P). In Bacillus cereus (strain B4264), this protein is Methylthioribulose-1-phosphate dehydratase.